Reading from the N-terminus, the 83-residue chain is Putative defensin-like protein 131 (83 aa).

The first 34 residues, 1–34, serve as a signal peptide directing secretion; it reads MAKNRVLTIFYCTIYYCICFKYVLLGMVVEKTQG. 4 disulfides stabilise this stretch: cysteine 37–cysteine 83, cysteine 46–cysteine 65, cysteine 51–cysteine 77, and cysteine 55–cysteine 79.

The protein belongs to the DEFL family.

It is found in the secreted. This is Putative defensin-like protein 131 (LCR29) from Arabidopsis thaliana (Mouse-ear cress).